The following is a 602-amino-acid chain: GTP-binding protein 2 (602 aa).

A disordered region spans residues 16-64; the sequence is GGGPAVGGTLKARGAGSSSGCGGPKGKKKNGRNRGGKANNPPYLPPEAE. Positions 40–50 are enriched in basic residues; it reads KGKKKNGRNRG. In terms of domain architecture, tr-type G spans 170–398; the sequence is FLDLRVAVLG…LNILPPLTNS (229 aa). Residues 179 to 186, 260 to 264, and 316 to 319 contribute to the GTP site; these read GNVDSGKS, DLAGH, and SKID.

This sequence belongs to the TRAFAC class translation factor GTPase superfamily. Classic translation factor GTPase family. GTPBP1 subfamily. As to expression, predominantly expressed in thymus, spleen, and testis. Expressed at lower levels in brain, lung, kidney, and ovary.

The chain is GTP-binding protein 2 from Homo sapiens (Human).